The chain runs to 603 residues: Probable potassium transport system protein Kup (603 aa).

The next 12 helical transmembrane spans lie at 15–35 (GLVF…IFLL), 43–63 (VIGV…VEYA), 94–114 (AAFI…DGVI), 136–156 (IGQG…FSVQ), 163–183 (ITWV…FSGI), 201–221 (AISF…EVIL), 244–264 (AWRL…AFII), 284–304 (IYIP…QAMI), 336–356 (IYIG…IFEF), 367–387 (GLAV…IFYL), 391–411 (MFRS…LLSN), and 415–435 (IPHG…LIII).

This sequence belongs to the HAK/KUP transporter (TC 2.A.72) family.

It localises to the cell membrane. The enzyme catalyses K(+)(in) + H(+)(in) = K(+)(out) + H(+)(out). Its function is as follows. Transport of potassium into the cell. Likely operates as a K(+):H(+) symporter. The sequence is that of Probable potassium transport system protein Kup from Methanosarcina acetivorans (strain ATCC 35395 / DSM 2834 / JCM 12185 / C2A).